The sequence spans 369 residues: Peptide chain release factor 2 (369 aa).

N5-methylglutamine is present on Gln-247.

It belongs to the prokaryotic/mitochondrial release factor family. In terms of processing, methylated by PrmC. Methylation increases the termination efficiency of RF2.

The protein localises to the cytoplasm. Functionally, peptide chain release factor 2 directs the termination of translation in response to the peptide chain termination codons UGA and UAA. This Phenylobacterium zucineum (strain HLK1) protein is Peptide chain release factor 2.